A 931-amino-acid chain; its full sequence is Isoleucine--tRNA ligase (931 aa).

The short motif at 57 to 67 (PYANGNIHIGH) is the 'HIGH' region element. Glutamate 555 serves as a coordination point for L-isoleucyl-5'-AMP. Residues 596 to 600 (KMSKS) carry the 'KMSKS' region motif. Lysine 599 contacts ATP. Zn(2+) is bound by residues cysteine 890, cysteine 893, cysteine 910, and cysteine 913.

Belongs to the class-I aminoacyl-tRNA synthetase family. IleS type 1 subfamily. As to quaternary structure, monomer. Zn(2+) is required as a cofactor.

The protein localises to the cytoplasm. It catalyses the reaction tRNA(Ile) + L-isoleucine + ATP = L-isoleucyl-tRNA(Ile) + AMP + diphosphate. In terms of biological role, catalyzes the attachment of isoleucine to tRNA(Ile). As IleRS can inadvertently accommodate and process structurally similar amino acids such as valine, to avoid such errors it has two additional distinct tRNA(Ile)-dependent editing activities. One activity is designated as 'pretransfer' editing and involves the hydrolysis of activated Val-AMP. The other activity is designated 'posttransfer' editing and involves deacylation of mischarged Val-tRNA(Ile). This Limosilactobacillus reuteri subsp. reuteri (strain JCM 1112) (Lactobacillus reuteri) protein is Isoleucine--tRNA ligase.